We begin with the raw amino-acid sequence, 795 residues long: Myosin light chain kinase 3 (795 aa).

Position 155 is a phosphoserine (Ser155). Disordered stretches follow at residues 236–257 (GPGQ…ASEN) and 305–328 (SSGP…GDAL). Ser351 and Ser432 each carry phosphoserine. Residues 367–452 (DQIPKGARPF…GPGRTEAGRL (86 aa)) are disordered. The region spanning 491–746 (VSQHEVLGGG…ATQCLKHEWL (256 aa)) is the Protein kinase domain. ATP is bound by residues 497–505 (LGGGRFGQV) and Lys520. Residue Asp612 is the Proton acceptor of the active site.

The protein belongs to the protein kinase superfamily. CAMK Ser/Thr protein kinase family. Requires Mg(2+) as cofactor. In terms of processing, phosphorylated on serine residues. As to expression, restricted to cardiomyocytes (at protein level). Down-regulated in heart after experimental myocardial infarction at the protein level; no significant changes at the mRNA level.

It localises to the cytoplasm. The catalysed reaction is L-seryl-[myosin light chain] + ATP = O-phospho-L-seryl-[myosin light chain] + ADP + H(+). It catalyses the reaction L-threonyl-[myosin light chain] + ATP = O-phospho-L-threonyl-[myosin light chain] + ADP + H(+). Its function is as follows. Kinase that phosphorylates MYL2 in vitro. Has been proposed to be calmodulin-dependent, although MYL2 phosphorylation has also been observed in the presence or absence of calmodulin. Promotes sarcomere formation in cardiomyocytes and increases cardiomyocyte contractility. The chain is Myosin light chain kinase 3 (Mylk3) from Mus musculus (Mouse).